Here is a 227-residue protein sequence, read N- to C-terminus: Orotidine 5'-phosphate decarboxylase (227 aa).

Substrate is bound by residues Asp8, Lys30, 59–68 (DLKLYDIPYT), Thr118, Arg178, Gln187, Gly207, and Arg208. Residue Lys61 is the Proton donor of the active site.

Belongs to the OMP decarboxylase family. Type 1 subfamily. In terms of assembly, homodimer.

The catalysed reaction is orotidine 5'-phosphate + H(+) = UMP + CO2. It participates in pyrimidine metabolism; UMP biosynthesis via de novo pathway; UMP from orotate: step 2/2. Catalyzes the decarboxylation of orotidine 5'-monophosphate (OMP) to uridine 5'-monophosphate (UMP). The polypeptide is Orotidine 5'-phosphate decarboxylase (Helicobacter pylori (strain ATCC 700392 / 26695) (Campylobacter pylori)).